A 354-amino-acid chain; its full sequence is Small ribosomal subunit biogenesis GTPase RsgA (354 aa).

The interval 1 to 46 (MSKKKPLSQGQLRRMRANHEKRLNRDSGDKNTPELQDSSLGPEQSG) is disordered. Over residues 17–32 (ANHEKRLNRDSGDKNT) the composition is skewed to basic and acidic residues. Over residues 33 to 46 (PELQDSSLGPEQSG) the composition is skewed to polar residues. The CP-type G domain maps to 108 to 276 (HSSLSRPDLY…LIDSPGVREF (169 aa)). Residues 164–167 (NKID) and 218–226 (GQSGVGKSS) contribute to the GTP site. Zn(2+) contacts are provided by Cys300, Cys305, His307, and Cys313.

Belongs to the TRAFAC class YlqF/YawG GTPase family. RsgA subfamily. In terms of assembly, monomer. Associates with 30S ribosomal subunit, binds 16S rRNA. Requires Zn(2+) as cofactor.

Its subcellular location is the cytoplasm. Functionally, one of several proteins that assist in the late maturation steps of the functional core of the 30S ribosomal subunit. Helps release RbfA from mature subunits. May play a role in the assembly of ribosomal proteins into the subunit. Circularly permuted GTPase that catalyzes slow GTP hydrolysis, GTPase activity is stimulated by the 30S ribosomal subunit. This chain is Small ribosomal subunit biogenesis GTPase RsgA, found in Shewanella oneidensis (strain ATCC 700550 / JCM 31522 / CIP 106686 / LMG 19005 / NCIMB 14063 / MR-1).